A 304-amino-acid chain; its full sequence is Fluoroacetate dehalogenase (304 aa).

An AB hydrolase-1 domain is found at 26 to 151 (PALLLLHGFP…FVARAYWHWY (126 aa)). The active-site Nucleophile is the D104. Fluoroacetate-binding residues include R105, R108, H149, W150, and Y212. The active-site Proton acceptor is H271.

The protein belongs to the AB hydrolase superfamily. Epoxide hydrolase family. Homodimer.

It carries out the reaction a haloacetate + H2O = a halide anion + glycolate + H(+). It catalyses the reaction fluoroacetate + H2O = fluoride + glycolate + H(+). Its function is as follows. Catalyzes the hydrolytic defluorination of fluoroacetate to produce glycolate. Has only very low activity towards chloroacetate and bromoacetate. This is Fluoroacetate dehalogenase (fac-dex) from Burkholderia sp.